An 87-amino-acid polypeptide reads, in one-letter code: uncharacterized protein (87 aa).

Residues 1–25 form the signal peptide; it reads MKIRKILLSSALSFGMLISAVPALA.

This is an uncharacterized protein from Bacillus subtilis (strain 168).